The following is a 255-amino-acid chain: Triosephosphate isomerase (255 aa).

9-11 (NWK) is a substrate binding site. The Electrophile role is filled by His-95. The Proton acceptor role is filled by Glu-167. Substrate-binding positions include Gly-173, Ser-212, and 233–234 (GG).

It belongs to the triosephosphate isomerase family. As to quaternary structure, homodimer.

The protein localises to the cytoplasm. The enzyme catalyses D-glyceraldehyde 3-phosphate = dihydroxyacetone phosphate. It functions in the pathway carbohydrate biosynthesis; gluconeogenesis. It participates in carbohydrate degradation; glycolysis; D-glyceraldehyde 3-phosphate from glycerone phosphate: step 1/1. Functionally, involved in the gluconeogenesis. Catalyzes stereospecifically the conversion of dihydroxyacetone phosphate (DHAP) to D-glyceraldehyde-3-phosphate (G3P). The protein is Triosephosphate isomerase of Pectobacterium atrosepticum (strain SCRI 1043 / ATCC BAA-672) (Erwinia carotovora subsp. atroseptica).